Reading from the N-terminus, the 536-residue chain is Organic anion transporter 3 (536 aa).

Topologically, residues 1-11 (MTFSEILDRVG) are cytoplasmic. S4 carries the post-translational modification Phosphoserine. The chain crosses the membrane as a helical span at residues 12–32 (SMGPFQYLHVTLLALPVLGIA). The Extracellular portion of the chain corresponds to 33 to 123 (NHNLLQIFTA…LVCSSNKLKE (91 aa)). Residues N81 and N86 are each glycosylated (N-linked (GlcNAc...) asparagine). Residues 124-144 (MAQSIFMAGILVGGPVIGELS) form a helical membrane-spanning segment. The Cytoplasmic segment spans residues 145–158 (DRFGRKPILTWSYL). A helical transmembrane segment spans residues 159–179 (MLAASGSGAAFSPSLPVYMIF). R180 is a topological domain (extracellular). Residues 181 to 201 (FLCGCSISGISLSTVILNVEW) traverse the membrane as a helical segment. Residues 202 to 212 (VPTSMRAISST) are Cytoplasmic-facing. Residues 213 to 233 (SIGYCYTIGQFILSGLAYAIP) traverse the membrane as a helical segment. Over 234-236 (QWR) the chain is Extracellular. Residues 237–257 (WLQLTSSAPFFIFSLLSWWVP) traverse the membrane as a helical segment. At 258-327 (ESIRWLVLSG…FRVSILRRVT (70 aa)) the chain is on the cytoplasmic side. Residues 328 to 348 (FCLSLAWFSTGFAYYSLAMGV) traverse the membrane as a helical segment. Residues 349 to 354 (EEFGVN) lie on the Extracellular side of the membrane. Residues 355–375 (IYILQIIFGGVDIPAKFITIL) form a helical membrane-spanning segment. Over 376–383 (SLSYLGRR) the chain is Cytoplasmic. Residues 384–404 (ITQSFLLLLAGGAILALIFVP) form a helical membrane-spanning segment. At 405-411 (SEMQLLR) the chain is on the extracellular side. A helical transmembrane segment spans residues 412–432 (TALAVFGKGCLSGSFSCLFLY). The Cytoplasmic portion of the chain corresponds to 433–471 (TSELYPTVLRQTGMGISNVWARVGSMIAPLVKITGELQP). The helical transmembrane segment at 472–492 (FIPNVIFGTTALLGGSAAFFL) threads the bilayer. The Extracellular segment spans residues 493 to 536 (LETLNRPLPETIEDIQNWHKQVQKTKQESEAEKASQIIPLKTGG). The segment at 515–536 (QKTKQESEAEKASQIIPLKTGG) is disordered.

This sequence belongs to the major facilitator (TC 2.A.1) superfamily. Organic cation transporter (TC 2.A.1.19) family. In terms of tissue distribution, expressed in the liver, brain, kidney, choroid plexus and weakly in the eye. Moderately expressed (at protein level) in the brain capillary endothelial cells (BCEC).

It localises to the basolateral cell membrane. It catalyses the reaction estrone 3-sulfate(out) + glutarate(in) = estrone 3-sulfate(in) + glutarate(out). The enzyme catalyses estrone 3-sulfate(in) + 2-oxoglutarate(out) = estrone 3-sulfate(out) + 2-oxoglutarate(in). It carries out the reaction glutarate(in) + 2-oxoglutarate(out) = glutarate(out) + 2-oxoglutarate(in). The catalysed reaction is urate(in) + 2-oxoglutarate(out) = urate(out) + 2-oxoglutarate(in). It catalyses the reaction taurocholate(out) + glutarate(in) = taurocholate(in) + glutarate(out). The enzyme catalyses dehydroepiandrosterone 3-sulfate(out) + glutarate(in) = dehydroepiandrosterone 3-sulfate(in) + glutarate(out). It carries out the reaction prostaglandin F2alpha(out) + glutarate(in) = prostaglandin F2alpha(in) + glutarate(out). The catalysed reaction is prostaglandin F2alpha(out) + 2-oxoglutarate(in) = prostaglandin F2alpha(in) + 2-oxoglutarate(out). It catalyses the reaction (R)-carnitine(out) + 2-oxoglutarate(in) = (R)-carnitine(in) + 2-oxoglutarate(out). The enzyme catalyses glutarate(in) + (R)-carnitine(out) = glutarate(out) + (R)-carnitine(in). It carries out the reaction prostaglandin E2(out) + 2-oxoglutarate(in) = prostaglandin E2(in) + 2-oxoglutarate(out). The catalysed reaction is prostaglandin E2(out) + glutarate(in) = prostaglandin E2(in) + glutarate(out). It catalyses the reaction urate(in) + glutarate(out) = urate(out) + glutarate(in). The enzyme catalyses taurocholate(out) + 2-oxoglutarate(in) = taurocholate(in) + 2-oxoglutarate(out). It carries out the reaction dehydroepiandrosterone 3-sulfate(out) + 2-oxoglutarate(in) = dehydroepiandrosterone 3-sulfate(in) + 2-oxoglutarate(out). The catalysed reaction is kynurenate(out) + a dicarboxylate(in) = kynurenate(in) + a dicarboxylate(out). It catalyses the reaction (indol-3-yl)acetate(out) + a dicarboxylate(in) = (indol-3-yl)acetate(in) + a dicarboxylate(out). The enzyme catalyses indoxyl sulfate(out) + a dicarboxylate(in) = indoxyl sulfate(in) + a dicarboxylate(out). It carries out the reaction N-benzoylglycine(out) + a dicarboxylate(in) = N-benzoylglycine(in) + a dicarboxylate(out). The catalysed reaction is 3-carboxy-4-methyl-5-propyl-2-furanpropanoate(out) + a dicarboxylate(in) = 3-carboxy-4-methyl-5-propyl-2-furanpropanoate(in) + a dicarboxylate(out). It catalyses the reaction (6R)-L-erythro-5,6,7,8-tetrahydrobiopterin(out) + a dicarboxylate(in) = (6R)-L-erythro-5,6,7,8-tetrahydrobiopterin(in) + a dicarboxylate(out). The enzyme catalyses L-erythro-7,8-dihydrobiopterin(out) + a dicarboxylate(in) = L-erythro-7,8-dihydrobiopterin(in) + a dicarboxylate(out). It carries out the reaction L-sepiapterin(out) + a dicarboxylate(in) = L-sepiapterin(in) + a dicarboxylate(out). In terms of biological role, functions as an organic anion/dicarboxylate exchanger that couples organic anion uptake indirectly to the sodium gradient. Transports organic anions such as estrone 3-sulfate (E1S) and urate in exchange for dicarboxylates such as glutarate or ketoglutarate (2-oxoglutarate). Plays an important role in the excretion of endogenous and exogenous organic anions, especially from the kidney and the brain. E1S transport is pH- and chloride-dependent and may also involve E1S/cGMP exchange. Responsible for the transport of prostaglandin E2 (PGE2) and prostaglandin F2(alpha) (PGF2(alpha)) in the basolateral side of the renal tubule. Involved in the transport of neuroactive tryptophan metabolites kynurenate and xanthurenate. Functions as a biopterin transporters involved in the uptake and the secretion of coenzymes tetrahydrobiopterin (BH4), dihydrobiopterin (BH2) and sepiapterin to urine, thereby determining baseline levels of blood biopterins. May be involved in the basolateral transport of steviol, a metabolite of the popular sugar substitute stevioside. May participate in the detoxification/ renal excretion of drugs and xenobiotics, such as the histamine H(2)-receptor antagonists fexofenadine and cimetidine, the antibiotic benzylpenicillin (PCG), the anionic herbicide 2,4-dichloro-phenoxyacetate (2,4-D), the diagnostic agent p-aminohippurate (PAH), the antiviral acyclovir (ACV), and the mycotoxin ochratoxin (OTA), by transporting these exogenous organic anions across the cell membrane in exchange for dicarboxylates such as 2-oxoglutarate. Contributes to the renal uptake of potent uremic toxins (indoxyl sulfate (IS), indole acetate (IA), hippurate/N-benzoylglycine (HA) and 3-carboxy-4-methyl-5-propyl-2-furanpropionate (CMPF)), pravastatin, PCG, E1S and dehydroepiandrosterone sulfate (DHEAS), and is partly involved in the renal uptake of temocaprilat (an angiotensin-converting enzyme (ACE) inhibitor). May contribute to the release of cortisol in the adrenals. Involved in one of the detoxification systems on the choroid plexus (CP), removes substrates such as E1S or taurocholate (TC), PCG, 2,4-D and PAH, from the cerebrospinal fluid (CSF) to the blood for eventual excretion in urine and bile. Regulates the CSF concentration of histamine H(2)-receptor antagonists cimetidine and ranitidine at the CP. Also contributes to the uptake of several other organic compounds such as the prostanoids prostaglandin E(2) and prostaglandin F(2-alpha), L-carnitine, and the therapeutic drugs allopurinol, 6-mercaptopurine (6-MP) and 5-fluorouracil (5-FU). Mediates the uptake from brain of organic anions, such as E1S, PAH, and OTA. Mediates the transport of PAH, PCG, and the statins pravastatin and pitavastatin, from the cerebrum into the blood circulation across the blood-brain barrier (BBB). In summary, plays a role in the efflux of drugs and xenobiotics, helping reduce their undesired toxicological effects on the body. The sequence is that of Organic anion transporter 3 (Slc22a8) from Rattus norvegicus (Rat).